A 100-amino-acid polypeptide reads, in one-letter code: Integration host factor subunit alpha (100 aa).

This sequence belongs to the bacterial histone-like protein family. In terms of assembly, heterodimer of an alpha and a beta chain.

In terms of biological role, this protein is one of the two subunits of integration host factor, a specific DNA-binding protein that functions in genetic recombination as well as in transcriptional and translational control. The protein is Integration host factor subunit alpha of Ruegeria sp. (strain TM1040) (Silicibacter sp.).